The following is a 156-amino-acid chain: MGRFIFLSSGWLVVFLSLSGTGADEGCLPGWSLYEGHCYKFFFIFKTWENAEKFCQEQSNGKNLASIEWLGKANFVAELVSQALTKTKYHVWIGLRREDEKQQCSSFWTDGSSVSYENVIRYTKCVGLNKNTGHRTWIALHCGDNYPFVCMSRLPH.

Residues 1 to 23 form the signal peptide; sequence MGRFIFLSSGWLVVFLSLSGTGA. Intrachain disulfides connect Cys-27–Cys-38, Cys-55–Cys-150, and Cys-125–Cys-142. The C-type lectin domain maps to 34–151; that stretch reads YEGHCYKFFF…CGDNYPFVCM (118 aa).

It belongs to the snaclec family. In terms of assembly, heterodimer; disulfide-linked. In terms of tissue distribution, expressed by the venom gland.

It localises to the secreted. Functionally, antagonist of the alpha-2 subunit of the integrin alpha-2/beta-1 (ITGA2/ITGB1) on human platelets and endothelial cells. This protein inhibits collagen-stimulated activation of human platelets in a dose-dependent manner. In addition, it antagonizes the binding of monoclonal antibodies against the alpha-2 subunit of integrin alpha-2/beta-1 to platelets and it coimmunoprecipitates with this integrin. The protein is Snaclec rhinocetin subunit alpha of Bitis rhinoceros (West African gaboon viper).